The sequence spans 285 residues: Probable endonuclease 4 (285 aa).

9 residues coordinate Zn(2+): His69, His109, Glu145, Asp179, His182, His216, Asp229, His231, and Glu261.

Belongs to the AP endonuclease 2 family. Zn(2+) is required as a cofactor.

The catalysed reaction is Endonucleolytic cleavage to 5'-phosphooligonucleotide end-products.. In terms of biological role, endonuclease IV plays a role in DNA repair. It cleaves phosphodiester bonds at apurinic or apyrimidinic (AP) sites, generating a 3'-hydroxyl group and a 5'-terminal sugar phosphate. This chain is Probable endonuclease 4, found in Cronobacter sakazakii (strain ATCC BAA-894) (Enterobacter sakazakii).